The chain runs to 133 residues: Arginine decarboxylase proenzyme (133 aa).

Catalysis depends on Ser-81, which acts as the Schiff-base intermediate with substrate; via pyruvic acid. Ser-81 carries the pyruvic acid (Ser); by autocatalysis modification. His-86 acts as the Proton acceptor; for processing activity in catalysis. The Proton donor; for catalytic activity role is filled by Cys-101.

This sequence belongs to the prokaryotic AdoMetDC family. Type 1 subfamily. In terms of assembly, heterooctamer of four alpha and four beta chains arranged as a tetramer of alpha/beta heterodimers. Pyruvate is required as a cofactor. In terms of processing, is synthesized initially as an inactive proenzyme. Formation of the active enzyme involves a self-maturation process in which the active site pyruvoyl group is generated from an internal serine residue via an autocatalytic post-translational modification. Two non-identical subunits are generated from the proenzyme in this reaction, and the pyruvate is formed at the N-terminus of the alpha chain, which is derived from the carboxyl end of the proenzyme. The post-translation cleavage follows an unusual pathway, termed non-hydrolytic serinolysis, in which the side chain hydroxyl group of the serine supplies its oxygen atom to form the C-terminus of the beta chain, while the remainder of the serine residue undergoes an oxidative deamination to produce ammonia and the pyruvoyl group blocking the N-terminus of the alpha chain.

It carries out the reaction L-arginine + H(+) = agmatine + CO2. The protein operates within amine and polyamine biosynthesis; agmatine biosynthesis; agmatine from L-arginine: step 1/1. In terms of biological role, specifically catalyzes the decarboxylation of L-arginine to agmatine. Has no S-adenosylmethionine decarboxylase (AdoMetDC) activity. This chain is Arginine decarboxylase proenzyme, found in Pyrobaculum arsenaticum (strain DSM 13514 / JCM 11321 / PZ6).